Here is a 257-residue protein sequence, read N- to C-terminus: MSLLSKTRELNTLLQKHKGIAVDFKDVARKISEVTVTNVFIVSRRGKILGHSLNELLKSNRINQMLEDRHIPSEYTDKLIDVKQTVSNIGIDDDLSVFPPENRDTFIDSKTTIFPVLGGGERLGTLVLGRVSDDFTDNDLVLGEYAATVLGMEILREKHSEVEQEARDKAAINMAINSLSYSEREAIEHIFEELGGKEGLLIASKVADRVGITRSVIVNALRKLESAGVIESRSLGMKGTFIKVKKEQFLDELEKSN.

The tract at residues 1 to 155 (MSLLSKTREL…AATVLGMEIL (155 aa)) is GAF domain. The H-T-H motif DNA-binding region spans 203-222 (ASKVADRVGITRSVIVNALR).

This sequence belongs to the CodY family.

It localises to the cytoplasm. Functionally, DNA-binding global transcriptional regulator which is involved in the adaptive response to starvation and acts by directly or indirectly controlling the expression of numerous genes in response to nutrient availability. During rapid exponential growth, CodY is highly active and represses genes whose products allow adaptation to nutrient depletion. This is Global transcriptional regulator CodY from Staphylococcus carnosus (strain TM300).